Here is a 331-residue protein sequence, read N- to C-terminus: D-alanine--D-alanine ligase (331 aa).

The 207-residue stretch at 122–328 (KLWYDAIGIP…FHEFLADCIE (207 aa)) folds into the ATP-grasp domain. 152 to 207 (AFDKWGKLFVKAARQGSSVGCYSVTKIEQLSDAIDKAFGFSHQVLVEKAVKPRELE) is an ATP binding site. Residues Asp282, Glu295, and Asn297 each coordinate Mg(2+).

Belongs to the D-alanine--D-alanine ligase family. The cofactor is Mg(2+). Mn(2+) serves as cofactor.

Its subcellular location is the cytoplasm. It catalyses the reaction 2 D-alanine + ATP = D-alanyl-D-alanine + ADP + phosphate + H(+). The protein operates within cell wall biogenesis; peptidoglycan biosynthesis. Its function is as follows. Cell wall formation. The sequence is that of D-alanine--D-alanine ligase from Vibrio vulnificus (strain CMCP6).